Here is a 38-residue protein sequence, read N- to C-terminus: Photosystem II reaction center protein L (38 aa).

A helical transmembrane segment spans residues 17–37 (SLYWGLLLIFVLAVLFSNYFF).

This sequence belongs to the PsbL family. In terms of assembly, PSII is composed of 1 copy each of membrane proteins PsbA, PsbB, PsbC, PsbD, PsbE, PsbF, PsbH, PsbI, PsbJ, PsbK, PsbL, PsbM, PsbT, PsbX, PsbY, PsbZ, Psb30/Ycf12, at least 3 peripheral proteins of the oxygen-evolving complex and a large number of cofactors. It forms dimeric complexes.

The protein localises to the plastid. Its subcellular location is the chloroplast thylakoid membrane. In terms of biological role, one of the components of the core complex of photosystem II (PSII). PSII is a light-driven water:plastoquinone oxidoreductase that uses light energy to abstract electrons from H(2)O, generating O(2) and a proton gradient subsequently used for ATP formation. It consists of a core antenna complex that captures photons, and an electron transfer chain that converts photonic excitation into a charge separation. This subunit is found at the monomer-monomer interface and is required for correct PSII assembly and/or dimerization. This chain is Photosystem II reaction center protein L, found in Antirrhinum majus (Garden snapdragon).